A 187-amino-acid polypeptide reads, in one-letter code: Orotate phosphoribosyltransferase (187 aa).

110-118 (EDVVTTGGS) is a binding site for 5-phospho-alpha-D-ribose 1-diphosphate. Residues T114 and R142 each contribute to the orotate site.

The protein belongs to the purine/pyrimidine phosphoribosyltransferase family. PyrE subfamily. In terms of assembly, homodimer. Mg(2+) serves as cofactor.

It catalyses the reaction orotidine 5'-phosphate + diphosphate = orotate + 5-phospho-alpha-D-ribose 1-diphosphate. It participates in pyrimidine metabolism; UMP biosynthesis via de novo pathway; UMP from orotate: step 1/2. Catalyzes the transfer of a ribosyl phosphate group from 5-phosphoribose 1-diphosphate to orotate, leading to the formation of orotidine monophosphate (OMP). This is Orotate phosphoribosyltransferase from Thermotoga neapolitana (strain ATCC 49049 / DSM 4359 / NBRC 107923 / NS-E).